Here is an 874-residue protein sequence, read N- to C-terminus: Alanine--tRNA ligase (874 aa).

Zn(2+)-binding residues include histidine 563, histidine 567, cysteine 665, and histidine 669.

Belongs to the class-II aminoacyl-tRNA synthetase family. It depends on Zn(2+) as a cofactor.

The protein localises to the cytoplasm. The catalysed reaction is tRNA(Ala) + L-alanine + ATP = L-alanyl-tRNA(Ala) + AMP + diphosphate. In terms of biological role, catalyzes the attachment of alanine to tRNA(Ala) in a two-step reaction: alanine is first activated by ATP to form Ala-AMP and then transferred to the acceptor end of tRNA(Ala). Also edits incorrectly charged Ser-tRNA(Ala) and Gly-tRNA(Ala) via its editing domain. The protein is Alanine--tRNA ligase of Actinobacillus succinogenes (strain ATCC 55618 / DSM 22257 / CCUG 43843 / 130Z).